The chain runs to 736 residues: Dynamin-1-like protein (736 aa).

At methionine 1 the chain carries N-acetylmethionine. Residues 22–302 (IIQLPQIVVV…LMHHIRDCLP (281 aa)) form the Dynamin-type G domain. The G1 motif stretch occupies residues 32 to 39 (GTQSSGKS). Position 32–40 (32–40 (GTQSSGKSS)) interacts with GTP. The segment at 58 to 60 (VTR) is G2 motif. Residues 146 to 149 (DLPG) are G3 motif. The tract at residues 215–218 (TKLD) is G4 motif. GTP-binding positions include 215-221 (TKLDLMD) and 246-249 (NRSQ). Positions 245–248 (VNRS) are G5 motif. The interval 344–489 (YCNTIEGTAK…NEMVHNLVAI (146 aa)) is middle domain. The interval 448 to 685 (NYSTQELLRF…NHVKDTLQSE (238 aa)) is interaction with GSK3B. A b domain region spans residues 502–569 (ADACGLMNNN…IQDSRRETKN (68 aa)). The disordered stretch occupies residues 523–590 (ELPSAVSRDK…VQEPTTGNWR (68 aa)). Serine 529 carries the post-translational modification Phosphoserine. Glycyl lysine isopeptide (Lys-Gly) (interchain with G-Cter in SUMO) cross-links involve residues lysine 532 and lysine 535. Residues 537-554 (PSALAPASQEPSPAASAE) are compositionally biased toward low complexity. The residue at position 548 (serine 548) is a Phosphoserine. Positions 555 to 568 (ADGKLIQDSRRETK) are enriched in basic and acidic residues. Residues lysine 558 and lysine 568 each participate in a glycyl lysine isopeptide (Lys-Gly) (interchain with G-Cter in SUMO) cross-link. Residues threonine 585 and threonine 586 are each glycosylated (O-linked (GlcNAc) threonine). Lysine 594 participates in a covalent cross-link: Glycyl lysine isopeptide (Lys-Gly) (interchain with G-Cter in SUMO). N6-acetyllysine; alternate is present on lysine 597. A Glycyl lysine isopeptide (Lys-Gly) (interchain with G-Cter in SUMO); alternate cross-link involves residue lysine 597. Lysine 606 participates in a covalent cross-link: Glycyl lysine isopeptide (Lys-Gly) (interchain with G-Cter in SUMO). A Phosphoserine modification is found at serine 607. Residue lysine 608 forms a Glycyl lysine isopeptide (Lys-Gly) (interchain with G-Cter in SUMO) linkage. At serine 616 the chain carries Phosphoserine; by CDK1 and PINK1. Residue serine 637 is modified to Phosphoserine; by CAMK1 and PKA. S-nitrosocysteine is present on cysteine 644. In terms of domain architecture, GED spans 644-735 (CEVIERLIKS…IIAEIRETHL (92 aa)). The tract at residues 654–668 (YFLIVRKNIQDSVPK) is important for homodimerization.

Belongs to the TRAFAC class dynamin-like GTPase superfamily. Dynamin/Fzo/YdjA family. In terms of assembly, homotetramer; dimerizes through the N-terminal GTP-middle region of one molecule binding to the GED domain of another DNM1L molecule. Oligomerizes in a GTP-dependent manner to form membrane-associated tubules with a spiral pattern. Interacts with GSK3B and MARCHF5. Interacts (via the GTPase and B domains) with UBE2I; the interaction promotes sumoylation of DNM1L, mainly in its B domain. Interacts with PPP3CA; the interaction dephosphorylates DNM1L and regulates its transition to mitochondria. Interacts with BCL2L1 isoform BCL-X(L) and CLTA; DNM1L and BCL2L1 isoform BCL-X(L) may form a complex in synaptic vesicles that also contains clathrin and MFF. Interacts with MFF; the interaction is inhibited by C11orf65/MFI. Interacts with FIS1; may form part of a larger protein complex at the endoplasmic reticulum-mitochondrial interface during mitochondrial fission. Interacts with CANX. Interacts with BCAP31. Interacts with MIEF2 and MIEF1; GTP-dependent, regulates GTP hydrolysis and DNM1L oligomerization. Interacts with PGAM5; this interaction leads to dephosphorylation at Ser-656 and activation of GTPase activity and eventually to mitochondria fragmentation. Interacts with RALBP1; during mitosis, recruits DNM1L to the mitochondrion and mediates its activation by the mitotic kinase cyclin B-CDK1. Interacts with FUNDC1; this interaction recruits DNM1L/DRP1 at ER-mitochondria contact sites. Phosphorylation/dephosphorylation events on two sites near the GED domain regulate mitochondrial fission. Phosphorylation on Ser-637 by CAMK1 and PKA inhibits the GTPase activity, leading to a defect in mitochondrial fission promoting mitochondrial elongation. Dephosphorylated on this site by PPP3CA which promotes mitochondrial fission. Phosphorylation on Ser-616 by CDK1 and PINK1 activates the GTPase activity and promotes mitochondrial fission. Phosphorylated in a circadian manner at Ser-637. Dephosphorylated by PGAM5. In terms of processing, sumoylated on various lysine residues within the B domain, probably by MUL1. Sumoylation positively regulates mitochondrial fission. Desumoylated by SENP5 during G2/M transition of mitosis. Appears to be linked to its catalytic activity. Post-translationally, S-nitrosylation increases DNM1L dimerization, mitochondrial fission and causes neuronal damage. Ubiquitination by MARCHF5 affects mitochondrial morphology. In terms of processing, O-GlcNAcylation augments the level of the GTP-bound active form of DNM1L and induces translocation from the cytoplasm to mitochondria in cardiomyocytes. It also decreases phosphorylation at Ser-637. As to expression, ubiquitously expressed with highest levels found in skeletal muscles, heart, kidney and brain. Isoform 1 is brain-specific. Isoform 2 and isoform 3 are predominantly expressed in testis and skeletal muscles respectively. Isoform 4 is weakly expressed in brain, heart and kidney. Isoform 5 is dominantly expressed in liver, heart and kidney. Isoform 6 is expressed in neurons.

Its subcellular location is the cytoplasm. The protein localises to the cytosol. It is found in the golgi apparatus. The protein resides in the endomembrane system. It localises to the mitochondrion outer membrane. Its subcellular location is the peroxisome. The protein localises to the membrane. It is found in the clathrin-coated pit. The protein resides in the cytoplasmic vesicle. It localises to the secretory vesicle. Its subcellular location is the synaptic vesicle membrane. It carries out the reaction GTP + H2O = GDP + phosphate + H(+). GTPase activity is increased by binding to phospholipid membranes. Functions in mitochondrial and peroxisomal division. Mediates membrane fission through oligomerization into membrane-associated tubular structures that wrap around the scission site to constrict and sever the mitochondrial membrane through a GTP hydrolysis-dependent mechanism. The specific recruitment at scission sites is mediated by membrane receptors like MFF, MIEF1 and MIEF2 for mitochondrial membranes. While the recruitment by the membrane receptors is GTP-dependent, the following hydrolysis of GTP induces the dissociation from the receptors and allows DNM1L filaments to curl into closed rings that are probably sufficient to sever a double membrane. Acts downstream of PINK1 to promote mitochondrial fission in a PRKN-dependent manner. Plays an important role in mitochondrial fission during mitosis. Through its function in mitochondrial division, ensures the survival of at least some types of postmitotic neurons, including Purkinje cells, by suppressing oxidative damage. Required for normal brain development, including that of cerebellum. Facilitates developmentally regulated apoptosis during neural tube formation. Required for a normal rate of cytochrome c release and caspase activation during apoptosis; this requirement may depend upon the cell type and the physiological apoptotic cues. Required for formation of endocytic vesicles. Proposed to regulate synaptic vesicle membrane dynamics through association with BCL2L1 isoform Bcl-X(L) which stimulates its GTPase activity in synaptic vesicles; the function may require its recruitment by MFF to clathrin-containing vesicles. Required for programmed necrosis execution. Rhythmic control of its activity following phosphorylation at Ser-637 is essential for the circadian control of mitochondrial ATP production. In terms of biological role, inhibits peroxisomal division when overexpressed. The protein is Dynamin-1-like protein of Homo sapiens (Human).